Consider the following 551-residue polypeptide: HTH-type transcriptional regulator SgrR (551 aa).

The HTH marR-type domain occupies M1–R116. The segment at residues L26–D49 is a DNA-binding region (H-T-H motif). The interval E163–W492 is solute-binding.

In terms of biological role, activates the small RNA gene sgrS under glucose-phosphate stress conditions as well as yfdZ. Represses its own transcription under both stress and non-stress conditions. Might act as a sensor of the intracellular accumulation of phosphoglucose by binding these molecules in its C-terminal solute-binding domain. This chain is HTH-type transcriptional regulator SgrR, found in Shigella sonnei (strain Ss046).